Reading from the N-terminus, the 250-residue chain is MPDINNDVVAANFSRASRSYDLVAKIQKECCYKLVAMIRERLPHFMPASVLDIGAGTGYLTKLLLSEFPNACYTMNDISYEMLSRAREMVGESVSTILGDMSKVKFPVSDLIVSSMAIHWSSNPITVLKRVCRLSKVFAFSILVQPSLYEWNRLFHELSLPSPGLHYISSEEVELAMLDTSPTLFTWEVCNFDMRFASPKEFIRYMRQLGSNYSPAGFNAYHVRKVLKHAPGEFFSKYSVMFGVVSRSHF.

The protein belongs to the methyltransferase superfamily.

It carries out the reaction malonyl-[ACP] + S-adenosyl-L-methionine = malonyl-[ACP] methyl ester + S-adenosyl-L-homocysteine. The protein operates within cofactor biosynthesis; biotin biosynthesis. Functionally, converts the free carboxyl group of a malonyl-thioester to its methyl ester by transfer of a methyl group from S-adenosyl-L-methionine (SAM). It allows to synthesize pimeloyl-ACP via the fatty acid synthetic pathway. The sequence is that of Malonyl-[acyl-carrier protein] O-methyltransferase from Neorickettsia risticii (strain Illinois).